Here is a 37-residue protein sequence, read N- to C-terminus: Large ribosomal subunit protein bL36 (37 aa).

The protein belongs to the bacterial ribosomal protein bL36 family.

This Leptothrix cholodnii (strain ATCC 51168 / LMG 8142 / SP-6) (Leptothrix discophora (strain SP-6)) protein is Large ribosomal subunit protein bL36.